Reading from the N-terminus, the 380-residue chain is Negative elongation factor E (380 aa).

Residues 7–36 (GLSEEEEALQKKFNKLKKKKKALLALKKQS) adopt a coiled-coil conformation. Positions 30–43 (LALKKQSSSSTTSQ) are enriched in low complexity. The segment at 30–67 (LALKKQSSSSTTSQGGVKRSLSEQPVMDTATATEQAKQ) is disordered. Residue Ser-51 is modified to Phosphoserine. Lys-78 is covalently cross-linked (Glycyl lysine isopeptide (Lys-Gly) (interchain with G-Cter in SUMO1); alternate). Lys-78 is covalently cross-linked (Glycyl lysine isopeptide (Lys-Gly) (interchain with G-Cter in SUMO2); alternate). The tract at residues 79–258 (AETKNSGFKR…SDSFPERRAP (180 aa)) is disordered. Residue Lys-82 forms a Glycyl lysine isopeptide (Lys-Gly) (interchain with G-Cter in SUMO2) linkage. Residues 90-101 (RTLEGKLKDPEK) show a composition bias toward basic and acidic residues. Phosphoserine is present on residues Ser-113 and Ser-115. Glu-122 is modified (polyADP-ribosyl glutamic acid). Ser-131 and Ser-139 each carry phosphoserine. Glu-151 carries the post-translational modification PolyADP-ribosyl glutamic acid. Ser-165 carries the post-translational modification Phosphoserine. Glu-172 bears the PolyADP-ribosyl glutamic acid mark. A Phosphoserine modification is found at Ser-179. Residues Ser-181, Ser-185, and Ser-187 each carry the phosphoserine; by CDK9 modification. 4 tandem repeats follow at residues 184–185 (RS), 186–187 (RS), 188–189 (RD), and 190–191 (RS). The 30 X 2 AA approximate tandem repeats of R-[DSNE] stretch occupies residues 184–243 (RSRSRDRSHERNRDRDRDRERDRDRDRDRDRERDRDRDRDRDRDRERDRDRERDRDRDRE). Basic and acidic residues predominate over residues 186-256 (RSRDRSHERN…RRSDSFPERR (71 aa)). The residue at position 191 (Ser-191) is a Phosphoserine; by CDK9. The 5; approximate repeat unit spans residues 192–193 (HE). 25 repeat units span residues 194–195 (RN), 196–197 (RD), 198–199 (RD), 200–201 (RD), 202–203 (RE), 204–205 (RD), 206–207 (RD), 208–209 (RD), 210–211 (RD), 212–213 (RD), 214–215 (RE), 216–217 (RD), 218–219 (RD), 220–221 (RD), 222–223 (RD), 224–225 (RD), 226–227 (RD), 228–229 (RE), 230–231 (RD), 232–233 (RD), 234–235 (RE), 236–237 (RD), 238–239 (RD), 240–241 (RD), and 242–243 (RE). 2 positions are modified to phosphoserine: Ser-249 and Ser-251. The RRM domain maps to 262–332 (NTLYVYGEDM…VQLKVNIARK (71 aa)). Thr-272 and Thr-274 each carry phosphothreonine. Ser-281 and Ser-353 each carry phosphoserine. Glu-374 bears the PolyADP-ribosyl glutamic acid mark.

Belongs to the RRM NELF-E family. The NELF complex is composed of NELFA, NELFB, NELFCD (isoform NELF-C or isoform NELF-D) and NELFE. Interacts with NELFB. As to quaternary structure, (Microbial infection) Binds to the HIV-1 TAR RNA which is located in the long terminal repeat (LTR) of HIV-1. In terms of processing, phosphorylated by the P-TEFb complex at sites next to its RNA recognition motif, promoting its release from chromatin. Sumoylated. Post-translationally, poly-ADP-ribosylated by PARP1, thereby preventing RNA-binding and relieving transcription pausing. As to expression, widely expressed. Expressed in heart, brain, lung, placenta, liver, skeletal muscle, kidney and pancreas.

The protein localises to the nucleus. It localises to the chromosome. Its function is as follows. Essential component of the NELF complex, a complex that negatively regulates the elongation of transcription by RNA polymerase II. The NELF complex, which acts via an association with the DSIF complex and causes transcriptional pausing, is counteracted by the P-TEFb kinase complex. Provides the strongest RNA binding activity of the NELF complex and may initially recruit the NELF complex to RNA. Functionally, (Microbial infection) The NELF complex is involved in HIV-1 latency possibly involving recruitment of PCF11 to paused RNA polymerase II. The polypeptide is Negative elongation factor E (NELFE) (Homo sapiens (Human)).